Consider the following 126-residue polypeptide: Large ribosomal subunit protein uL22 (126 aa).

Belongs to the universal ribosomal protein uL22 family. As to quaternary structure, part of the 50S ribosomal subunit.

This protein binds specifically to 23S rRNA; its binding is stimulated by other ribosomal proteins, e.g. L4, L17, and L20. It is important during the early stages of 50S assembly. It makes multiple contacts with different domains of the 23S rRNA in the assembled 50S subunit and ribosome. Functionally, the globular domain of the protein is located near the polypeptide exit tunnel on the outside of the subunit, while an extended beta-hairpin is found that lines the wall of the exit tunnel in the center of the 70S ribosome. The protein is Large ribosomal subunit protein uL22 of Caulobacter vibrioides (strain ATCC 19089 / CIP 103742 / CB 15) (Caulobacter crescentus).